We begin with the raw amino-acid sequence, 134 residues long: Methylmalonyl-CoA decarboxylase subunit gamma (134 aa).

A compositionally biased stretch (low complexity) spans 28-38 (APAARPAAAPA). The tract at residues 28–67 (APAARPAAAPAPAAPKPAAAPAPAPAPKTTAAGAGAGANT) is disordered. The span at 39-53 (PAAPKPAAAPAPAPA) shows a compositional bias: pro residues. Low complexity predominate over residues 54–67 (PKTTAAGAGAGANT). One can recognise a Biotinyl-binding domain in the interval 58–134 (AAGAGAGANT…NAGDILVVLS (77 aa)). The residue at position 100 (Lys-100) is an N6-biotinyllysine.

In terms of assembly, the methylmalonyl-CoA decarboxylase is composed of four subunits: the carboxyltransferase alpha subunit (MmdA), the tunnel beta subunit (MmdB), the biotin-containing gamma subunit (MmdC) and the delta subunit (MmdD). It depends on biotin as a cofactor.

The protein resides in the cell membrane. The enzyme catalyses (S)-methylmalonyl-CoA + Na(+)(in) + H(+)(out) = propanoyl-CoA + Na(+)(out) + CO2. Its function is as follows. Biotin-containing subunit of the sodium ion pump methylmalonyl-CoA decarboxylase, which converts the chemical energy of a decarboxylation reaction into an electrochemical gradient of Na(+) ions across the cytoplasmic membrane, thereby creating a sodium ion motive force that is used for ATP synthesis. This Propionigenium modestum protein is Methylmalonyl-CoA decarboxylase subunit gamma.